Reading from the N-terminus, the 450-residue chain is FAD-dependent monooxygenase okaB (450 aa).

Residues 14-34 (IVIIIVGLGIAGLSAAIECHG) traverse the membrane as a helical segment. Positions 43 and 116 each coordinate FAD. R194 is an active-site residue. Positions 318 and 331 each coordinate FAD.

This sequence belongs to the paxM FAD-dependent monooxygenase family.

The protein resides in the membrane. The catalysed reaction is cyclo(N(8)-(alpha,alpha-dimethylallyl)-L-Trp-6a-(alpha,alpha-dimethylallyl)-L-Trp) + AH2 + O2 = okaramine C + A + H2O. It participates in alkaloid biosynthesis. FAD-dependent monooxygenase; part of the gene cluster that mediates the biosynthesis of okaramine B, a prenylated indole alkaloid that possesses an unusual octacyclic ring system, including a four-membered azetidine ring and an eight-membered azocine ring, and that exhibits insecticidal activity against silkworm larvae. Within the pathway, okaC performs indole 2,3-epoxidation, facilitating the formation of the hexahydropyrrolo[2,3-b]indole (HPI) moiety of okaramine C. okaC then performs asymmetric reverse prenylation of cyclo(L-Trp-L-Trp) at N-1 and C-2' of the indole ring to produce the cyclic prenylated tryptophan dimer cyclo(N8-(alpha,alpha-dimethylallyl)-L-Trp-6a-(alpha,alpha-dime-thylallyl)-L-Trp). The biosynthesis begins with the NRPS okaA that condenses two tryptophan molecules into cyclo(L-Trp-L-Trp). Prenylation by the prenyltransferase okaC then leads to the formation of cyclo(N8-(alpha,alpha-dimethylallyl)-L-Trp-6a-(alpha,alpha-dime-thylallyl)-L-Trp). This is followed by indole 2,3-epoxidation by the FAD-dependent monooxygenase okaB to facilitate the formation of the hexahydropyrrolo[2,3-b]indole (HPI) moiety of okaramine C. The cytochrome P450 monooxygenase okaD then likely catalyzes formation of the eight-membered ring of okaramine A. The dioxygenase okaE further forms the unusual 2-dimethyl-3-methyl-azetidine ring to yield 12-deshydroxyl okaramine E, as well as the hydroxylation of 12-deshydroxyl okaramine E to produce okaramine E. The cytochrome P450 monoxygenase okaG converts 12-deshydroxyl okaramine E into 3-desmethyl okaramine B which is further methylated by the methyltransferase okaF into okaramine B. In a shunt pathway, okaG and okaF together are also able to convert okaramine E into okaramine D. Okaramine H is produced by nonenzymatic conversion from okaramine A. The protein is FAD-dependent monooxygenase okaB of Penicillium ochrochloron.